A 433-amino-acid polypeptide reads, in one-letter code: 3-phosphoshikimate 1-carboxyvinyltransferase (433 aa).

Lysine 22, serine 23, and arginine 27 together coordinate 3-phosphoshikimate. Lysine 22 provides a ligand contact to phosphoenolpyruvate. Phosphoenolpyruvate is bound by residues glycine 96 and arginine 129. 3-phosphoshikimate is bound by residues serine 175, serine 176, glutamine 177, serine 203, aspartate 318, asparagine 341, and lysine 345. Glutamine 177 lines the phosphoenolpyruvate pocket. Aspartate 318 serves as the catalytic Proton acceptor. Arginine 349, arginine 393, and lysine 418 together coordinate phosphoenolpyruvate.

Belongs to the EPSP synthase family. As to quaternary structure, monomer.

It localises to the cytoplasm. The catalysed reaction is 3-phosphoshikimate + phosphoenolpyruvate = 5-O-(1-carboxyvinyl)-3-phosphoshikimate + phosphate. It functions in the pathway metabolic intermediate biosynthesis; chorismate biosynthesis; chorismate from D-erythrose 4-phosphate and phosphoenolpyruvate: step 6/7. Catalyzes the transfer of the enolpyruvyl moiety of phosphoenolpyruvate (PEP) to the 5-hydroxyl of shikimate-3-phosphate (S3P) to produce enolpyruvyl shikimate-3-phosphate and inorganic phosphate. This chain is 3-phosphoshikimate 1-carboxyvinyltransferase, found in Mannheimia succiniciproducens (strain KCTC 0769BP / MBEL55E).